A 227-amino-acid chain; its full sequence is Cytidylate kinase (227 aa).

12 to 20 (GPSGAGKGT) contributes to the ATP binding site.

This sequence belongs to the cytidylate kinase family. Type 1 subfamily.

It is found in the cytoplasm. It catalyses the reaction CMP + ATP = CDP + ADP. The catalysed reaction is dCMP + ATP = dCDP + ADP. The chain is Cytidylate kinase from Citrobacter koseri (strain ATCC BAA-895 / CDC 4225-83 / SGSC4696).